We begin with the raw amino-acid sequence, 325 residues long: uncharacterized protein (325 aa).

This is an uncharacterized protein from Escherichia coli (Bacteriophage T4).